Consider the following 317-residue polypeptide: MPADTRPAAIVLMGPTASGKSQLAIDIAKRWGGEVISVDSVLVYRGLDIGTAKPNAAMRASVPHHLIDICEPWETYSAADFAHDARAAIDMIVRRGALPILTGGTGLYFRALLAGLSDMPPAHPEIRAMIAAEAKRDSWAALHTRLAEVDAITAARIHATDPQRIQRALEVYLVSGQSMSDWQNQPPKQRLPLRVLKLVLAPTHRKVLHFRIAQRFKAMLDNGLLAEVNALRTHPSIHAMARPLDLPAMRAVGYRQCWEHLDGMYTAEMLYQRSVAATRQLAKRQLTWLRGELDALWFDPEHDQSRIEKVMEAFLNR.

Position 14–21 (14–21 (GPTASGKS)) interacts with ATP. 16–21 (TASGKS) is a substrate binding site. Interaction with substrate tRNA regions lie at residues 39 to 42 (DSVL) and 163 to 167 (QRIQR).

It belongs to the IPP transferase family. Monomer. It depends on Mg(2+) as a cofactor.

The catalysed reaction is adenosine(37) in tRNA + dimethylallyl diphosphate = N(6)-dimethylallyladenosine(37) in tRNA + diphosphate. Catalyzes the transfer of a dimethylallyl group onto the adenine at position 37 in tRNAs that read codons beginning with uridine, leading to the formation of N6-(dimethylallyl)adenosine (i(6)A). This chain is tRNA dimethylallyltransferase, found in Xylella fastidiosa (strain M23).